A 297-amino-acid chain; its full sequence is N-acetylneuraminate lyase (297 aa).

2 residues coordinate aceneuramate: Ser47 and Thr48. Tyr137 (proton donor) is an active-site residue. Residue Lys165 is the Schiff-base intermediate with substrate of the active site. Positions 167, 189, 191, 192, and 208 each coordinate aceneuramate.

This sequence belongs to the DapA family. NanA subfamily. In terms of assembly, homotetramer.

It is found in the cytoplasm. It carries out the reaction aceneuramate = aldehydo-N-acetyl-D-mannosamine + pyruvate. It participates in amino-sugar metabolism; N-acetylneuraminate degradation; D-fructose 6-phosphate from N-acetylneuraminate: step 1/5. Catalyzes the reversible aldol cleavage of N-acetylneuraminic acid (sialic acid; Neu5Ac) to form pyruvate and N-acetylmannosamine (ManNAc) via a Schiff base intermediate. This is N-acetylneuraminate lyase from Shigella boydii serotype 4 (strain Sb227).